The chain runs to 263 residues: N-acetylgalactosamine permease IID component (263 aa).

The PTS EIID domain maps to 3–263 (SEISKKDITR…SIVCSAFGIL (261 aa)). The next 6 membrane-spanning stretches (helical) occupy residues 61 to 81 (LEFINTHPNLVGFLMGLLISM), 98 to 118 (LFGPIAGIGDAIFWFTLLPIM), 131 to 151 (LLGPILFFAVYLLIFFLRVGW), 178 to 198 (TILGITVIGGLIASYVHINVV), 215 to 235 (FFDKVFPNILPMAYTLLMYYF), and 243 to 263 (PVLLIGVTFVLSIVCSAFGIL).

The protein resides in the cell inner membrane. The phosphoenolpyruvate-dependent sugar phosphotransferase system (PTS), a major carbohydrate active -transport system, catalyzes the phosphorylation of incoming sugar substrates concomitant with their translocation across the cell membrane. This system is involved in N-acetylgalactosamine transport. This is N-acetylgalactosamine permease IID component (agaD) from Escherichia coli (strain K12).